We begin with the raw amino-acid sequence, 425 residues long: Alpha-N-acetylgalactosaminidase (425 aa).

NAD(+) is bound by residues 29–30 (NR), E51, 99–102 (WLTH), 119–120 (EV), and N148. Residue Y177 participates in substrate binding. NAD(+)-binding positions include 194 to 198 (FHNHW) and Y211. Substrate is bound by residues 211–214 (YPTH) and Y293.

This sequence belongs to the Gfo/Idh/MocA family. Glycosyl hydrolase 109 subfamily. The cofactor is NAD(+).

It carries out the reaction Cleavage of non-reducing alpha-(1-&gt;3)-N-acetylgalactosamine residues from human blood group A and AB mucin glycoproteins, Forssman hapten and blood group A lacto series glycolipids.. Functionally, glycosidase that has specific alpha-N-acetylgalactosaminidase activity. This is Alpha-N-acetylgalactosaminidase from Bacteroides fragilis (strain ATCC 25285 / DSM 2151 / CCUG 4856 / JCM 11019 / LMG 10263 / NCTC 9343 / Onslow / VPI 2553 / EN-2).